The primary structure comprises 188 residues: dCTP deaminase (188 aa).

DCTP-binding positions include 111–116, 135–137, Q156, Y170, K179, and Q180; these read KSTYAR and TLE. E137 serves as the catalytic Proton donor/acceptor.

The protein belongs to the dCTP deaminase family. As to quaternary structure, homotrimer.

The catalysed reaction is dCTP + H2O + H(+) = dUTP + NH4(+). Its pathway is pyrimidine metabolism; dUMP biosynthesis; dUMP from dCTP (dUTP route): step 1/2. Catalyzes the deamination of dCTP to dUTP. The protein is dCTP deaminase of Rickettsia typhi (strain ATCC VR-144 / Wilmington).